The chain runs to 880 residues: Alanine--tRNA ligase (880 aa).

Positions 567, 571, 669, and 673 each coordinate Zn(2+).

This sequence belongs to the class-II aminoacyl-tRNA synthetase family. Zn(2+) serves as cofactor.

It is found in the cytoplasm. The enzyme catalyses tRNA(Ala) + L-alanine + ATP = L-alanyl-tRNA(Ala) + AMP + diphosphate. In terms of biological role, catalyzes the attachment of alanine to tRNA(Ala) in a two-step reaction: alanine is first activated by ATP to form Ala-AMP and then transferred to the acceptor end of tRNA(Ala). Also edits incorrectly charged Ser-tRNA(Ala) and Gly-tRNA(Ala) via its editing domain. The chain is Alanine--tRNA ligase from Bacillus anthracis.